Consider the following 119-residue polypeptide: MGRFVAVALLVLLSLSGLETIQHAPKIQVYSRHPAENGKPNFLNCYVSGFHPSDIEVDLLKNGKKIEKVEHSDLSFSKDWSFYLLYYTEFTPNEKDEYACRVSHVTFSTPKTVKWDRNM.

The N-terminal stretch at 1-20 is a signal peptide; it reads MGRFVAVALLVLLSLSGLET. The Ig-like C1-type domain occupies 25-114; that stretch reads PKIQVYSRHP…VTFSTPKTVK (90 aa). Cys45 and Cys100 are disulfide-bonded.

It belongs to the beta-2-microglobulin family. Heterodimer of an alpha chain and a beta chain. Beta-2-microglobulin is the beta-chain of major histocompatibility complex class I molecules.

The protein localises to the secreted. Functionally, component of the class I major histocompatibility complex (MHC). Involved in the presentation of peptide antigens to the immune system. This is Beta-2-microglobulin (B2M) from Callicebus personatus nigrifrons (Black-fronted titi).